Here is a 297-residue protein sequence, read N- to C-terminus: N-acetylneuraminate lyase (297 aa).

Aceneuramate-binding residues include serine 47 and threonine 48. Catalysis depends on tyrosine 137, which acts as the Proton donor. Catalysis depends on lysine 165, which acts as the Schiff-base intermediate with substrate. 5 residues coordinate aceneuramate: threonine 167, glycine 189, aspartate 191, glutamate 192, and serine 208.

It belongs to the DapA family. NanA subfamily. In terms of assembly, homotetramer.

Its subcellular location is the cytoplasm. The enzyme catalyses aceneuramate = aldehydo-N-acetyl-D-mannosamine + pyruvate. It participates in amino-sugar metabolism; N-acetylneuraminate degradation; D-fructose 6-phosphate from N-acetylneuraminate: step 1/5. Functionally, catalyzes the reversible aldol cleavage of N-acetylneuraminic acid (sialic acid; Neu5Ac) to form pyruvate and N-acetylmannosamine (ManNAc) via a Schiff base intermediate. The polypeptide is N-acetylneuraminate lyase (Escherichia coli (strain SMS-3-5 / SECEC)).